Here is a 306-residue protein sequence, read N- to C-terminus: Grixazone synthase (306 aa).

Cu(2+) contacts are provided by histidine 39, histidine 58, histidine 67, histidine 222, histidine 226, and histidine 248.

This sequence belongs to the tyrosinase family. Requires Cu(2+) as cofactor.

It carries out the reaction 2 3-amino-4-hydroxybenzoate + N-acetyl-L-cysteine + 2 O2 + H(+) = grixazone B + CO2 + 4 H2O. It catalyses the reaction 2 3-amino-4-hydroxybenzaldehyde + N-acetyl-L-cysteine + 2 O2 = grixazone A + formate + 3 H2O + H(+). The enzyme catalyses 4 2-aminophenol + 3 O2 = 2 2-aminophenoxazin-3-one + 6 H2O. With respect to regulation, inhibited by 3-amino-4-hydroxybenzensulfonic acid, 4-hydroxy-3-nitrobenzaldehyde, L-tyrosine, p-hydroxybenzaldehyde. Activated by the copper chaperone GriE. Involved in the biosynthesis of the parasiticide antibiotic grixazone. Catalyzes the oxidation of 3-amino-4-hydroxybenzoate (3,4-AHBOA) to yield the corresponding quinone imine which is then non-enzymatically conjugated with the thiol group of N-acetylcysteine. The resultant compound is oxidized to its quinone imine enzymatically and is then dimerized non-enzymatically with another quinone imine oxidized by GriF to yield grixazone B. 3-amino-4-hydroxybenzaldehyde (3,4-AHBAL) can also be used as substrate to yield grixazone A. In the grixazone biosynthetic pathway, it can also function as an o-aminophenol oxidase that catalyzes the formation of the phenoxazinone chromophore from alpha-aminophenol. It can also use 2-amino-4-methylphenol, and to a lesser extent, 3,4-dihydroxybenzaldehyde, catechol and 3,4-dihydroxy-L-phenylalanine (L-DOPA) as substrates. In contrast to tyrosinases, it does not display monophenolase activity. The chain is Grixazone synthase from Streptomyces griseus subsp. griseus (strain JCM 4626 / CBS 651.72 / NBRC 13350 / KCC S-0626 / ISP 5235).